A 312-amino-acid polypeptide reads, in one-letter code: Epoxyqueuosine reductase (312 aa).

Asp-132 serves as the catalytic Proton donor. The 4Fe-4S ferredoxin-type 1 domain occupies 174–206 (EVLEADKPSKPICGECEKCIEACPTKAIEEPFI). 8 residues coordinate [4Fe-4S] cluster: Cys-186, Cys-189, Cys-192, Cys-196, Cys-212, Cys-240, Cys-243, and Cys-247. A 4Fe-4S ferredoxin-type 2 domain is found at 226–257 (PENIINKMGNWIAGCDICQDVCPWNQKHIPST).

It belongs to the QueG family. Monomer. Cob(II)alamin serves as cofactor. It depends on [4Fe-4S] cluster as a cofactor.

It is found in the cytoplasm. It catalyses the reaction epoxyqueuosine(34) in tRNA + AH2 = queuosine(34) in tRNA + A + H2O. It participates in tRNA modification; tRNA-queuosine biosynthesis. Its function is as follows. Catalyzes the conversion of epoxyqueuosine (oQ) to queuosine (Q), which is a hypermodified base found in the wobble positions of tRNA(Asp), tRNA(Asn), tRNA(His) and tRNA(Tyr). The polypeptide is Epoxyqueuosine reductase (Prochlorococcus marinus (strain NATL2A)).